We begin with the raw amino-acid sequence, 122 residues long: Large ribosomal subunit protein uL14 (122 aa).

The protein belongs to the universal ribosomal protein uL14 family. As to quaternary structure, part of the 50S ribosomal subunit. Forms a cluster with proteins L3 and L19. In the 70S ribosome, L14 and L19 interact and together make contacts with the 16S rRNA in bridges B5 and B8.

Its function is as follows. Binds to 23S rRNA. Forms part of two intersubunit bridges in the 70S ribosome. In Staphylococcus carnosus (strain TM300), this protein is Large ribosomal subunit protein uL14.